Reading from the N-terminus, the 215-residue chain is Probable phosphoglycerate mutase GpmB (215 aa).

Substrate is bound by residues 8 to 15 (RHGETEWN), 21 to 22 (QG), Arg-58, Arg-60, 82 to 85 (ELHM), and 151 to 152 (GI). The active-site Tele-phosphohistidine intermediate is His-9. Glu-82 (proton donor/acceptor) is an active-site residue.

This sequence belongs to the phosphoglycerate mutase family. GpmB subfamily.

It carries out the reaction (2R)-2-phosphoglycerate = (2R)-3-phosphoglycerate. Its pathway is carbohydrate degradation; glycolysis; pyruvate from D-glyceraldehyde 3-phosphate: step 3/5. This chain is Probable phosphoglycerate mutase GpmB, found in Serratia proteamaculans (strain 568).